A 92-amino-acid polypeptide reads, in one-letter code: Small ribosomal subunit protein uS19c (92 aa).

The protein belongs to the universal ribosomal protein uS19 family.

It localises to the plastid. Its function is as follows. Protein S19 forms a complex with S13 that binds strongly to the 16S ribosomal RNA. This chain is Small ribosomal subunit protein uS19c, found in Cuscuta gronovii (Common dodder).